A 427-amino-acid polypeptide reads, in one-letter code: Gamma-glutamyl phosphate reductase (427 aa).

The protein belongs to the gamma-glutamyl phosphate reductase family.

It is found in the cytoplasm. It catalyses the reaction L-glutamate 5-semialdehyde + phosphate + NADP(+) = L-glutamyl 5-phosphate + NADPH + H(+). The protein operates within amino-acid biosynthesis; L-proline biosynthesis; L-glutamate 5-semialdehyde from L-glutamate: step 2/2. In terms of biological role, catalyzes the NADPH-dependent reduction of L-glutamate 5-phosphate into L-glutamate 5-semialdehyde and phosphate. The product spontaneously undergoes cyclization to form 1-pyrroline-5-carboxylate. The chain is Gamma-glutamyl phosphate reductase from Allorhizobium ampelinum (strain ATCC BAA-846 / DSM 112012 / S4) (Agrobacterium vitis (strain S4)).